We begin with the raw amino-acid sequence, 157 residues long: Transcriptional repressor NrdR (157 aa).

A disordered region spans residues 1–22 (MKCPYCSSPDSRVINSRPSDDG). Residues 3 to 34 (CPYCSSPDSRVINSRPSDDGASIRRRRECLTC) fold into a zinc finger. Positions 8–17 (SPDSRVINSR) are enriched in polar residues. The 88-residue stretch at 49–136 (LMVVKRSGVR…VYRDFDSLER (88 aa)) folds into the ATP-cone domain.

Belongs to the NrdR family. Requires Zn(2+) as cofactor.

Functionally, negatively regulates transcription of bacterial ribonucleotide reductase nrd genes and operons by binding to NrdR-boxes. The polypeptide is Transcriptional repressor NrdR (Deinococcus radiodurans (strain ATCC 13939 / DSM 20539 / JCM 16871 / CCUG 27074 / LMG 4051 / NBRC 15346 / NCIMB 9279 / VKM B-1422 / R1)).